We begin with the raw amino-acid sequence, 295 residues long: MDEDFFLPDFSLVDIDFDFNIYEENNLSPDESLSNSRRADQSSKFDHQMHFECLREKPKAAVKPMMKINNKQQLISFDFSSNVISSPAAEEIIMDKLVGRGTKRKTCSHGTRSPVLAKEHVLAERKRREKLSEKFIALSALLPGLKKADKVTILDDAISRMKQLQEQLRTLKEEKEATRQMESMILVKKSKVFFDEEPNLSCSPSVHIEFDQALPEIEAKISQNDILIRILCEKSKGCMINILNTIENFQLRIENSIVLPFGDSTLDITVLAQMDKDFSMSILKDLVRNLRLAMV.

The region spanning 115-164 is the bHLH domain; sequence VLAKEHVLAERKRREKLSEKFIALSALLPGLKKADKVTILDDAISRMKQL.

In terms of assembly, homodimer. Expressed in roots and leaves.

The protein resides in the nucleus. The chain is Transcription factor bHLH19 (BHLH19) from Arabidopsis thaliana (Mouse-ear cress).